The sequence spans 849 residues: Cytosolic phospholipase A2 zeta (849 aa).

Positions glutamate 27–phenylalanine 145 constitute a C2 domain. Positions 60, 66, 116, 118, and 123 each coordinate Ca(2+). Positions glutamate 306–alanine 849 constitute a PLA2c domain. Serine 395 serves as the catalytic Nucleophile. Catalysis depends on aspartate 680, which acts as the Proton acceptor.

Requires Ca(2+) as cofactor. As to expression, expressed in myocardium (at protein level).

It localises to the cytoplasm. The protein localises to the cytosol. Its subcellular location is the cell membrane. It is found in the mitochondrion. The enzyme catalyses a 1,2-diacyl-sn-glycero-3-phosphocholine + H2O = a 1-acyl-sn-glycero-3-phosphocholine + a fatty acid + H(+). It catalyses the reaction a 1-O-alkyl-2-acyl-sn-glycero-3-phosphocholine + H2O = a 1-O-alkyl-sn-glycero-3-phosphocholine + a fatty acid + H(+). The catalysed reaction is 1-hexadecanoyl-2-(9Z-octadecenoyl)-sn-glycero-3-phosphocholine + H2O = 2-(9Z-octadecenoyl)-sn-glycero-3-phosphocholine + hexadecanoate + H(+). It carries out the reaction 1-hexadecanoyl-2-(9Z,12Z-octadecadienoyl)-sn-glycero-3-phosphocholine + H2O = (9Z,12Z)-octadecadienoate + 1-hexadecanoyl-sn-glycero-3-phosphocholine + H(+). The enzyme catalyses 1-hexadecanoyl-2-(5Z,8Z,11Z,14Z-eicosatetraenoyl)-sn-glycero-3-phosphocholine + H2O = 1-hexadecanoyl-sn-glycero-3-phosphocholine + (5Z,8Z,11Z,14Z)-eicosatetraenoate + H(+). It catalyses the reaction 1-hexadecanoyl-2-(9Z,12Z-octadecadienoyl)-sn-glycero-3-phosphoethanolamine + H2O = 1-hexadecanoyl-sn-glycero-3-phosphoethanolamine + (9Z,12Z)-octadecadienoate + H(+). The catalysed reaction is 1-hexadecanoyl-2-(5Z,8Z,11Z,14Z-eicosatetraenoyl)-sn-glycero-3-phosphoethanolamine + H2O = 1-hexadecanoyl-sn-glycero-3-phosphoethanolamine + (5Z,8Z,11Z,14Z)-eicosatetraenoate + H(+). It carries out the reaction 1-(5Z,8Z,11Z,14Z-eicosatetraenoyl)-2-O-hexadecyl-sn-glycero-3-phosphocholine + H2O = 2-O-hexadecyl-sn-glycero-3-phosphocholine + (5Z,8Z,11Z,14Z)-eicosatetraenoate + H(+). The enzyme catalyses 1-O-hexadecyl-2-(5Z,8Z,11Z,14Z)-eicosatetraenoyl-sn-glycero-3-phosphocholine + H2O = 1-O-hexadecyl-sn-glycero-3-phosphocholine + (5Z,8Z,11Z,14Z)-eicosatetraenoate + H(+). It catalyses the reaction 1-hexadecanoyl-sn-glycero-3-phosphocholine + H2O = sn-glycerol 3-phosphocholine + hexadecanoate + H(+). Its activity is regulated as follows. Stimulated by cytosolic Ca(2+). Functionally, has calcium-dependent phospholipase and lysophospholipase activities with a potential role in membrane lipid remodeling and biosynthesis of lipid mediators. Preferentially hydrolyzes the ester bond of the fatty acyl group attached at sn-2 position of phospholipids (phospholipase A2 activity). Selectively hydrolyzes sn-2 arachidonoyl group from membrane phospholipids, providing the precursor for eicosanoid biosynthesis. In myocardial mitochondria, plays a major role in arachidonate release that is metabolically channeled to the formation of cardioprotective eicosanoids, epoxyeicosatrienoates (EETs). This is Cytosolic phospholipase A2 zeta (PLA2G4F) from Homo sapiens (Human).